The following is a 106-amino-acid chain: Iron-sulfur cluster assembly protein CyaY (106 aa).

Belongs to the frataxin family.

Its function is as follows. Involved in iron-sulfur (Fe-S) cluster assembly. May act as a regulator of Fe-S biogenesis. The chain is Iron-sulfur cluster assembly protein CyaY from Escherichia coli O9:H4 (strain HS).